Reading from the N-terminus, the 151-residue chain is 6,7-dimethyl-8-ribityllumazine synthase (151 aa).

Residues Phe15, 49 to 51 (AVE), and 73 to 75 (AVI) contribute to the 5-amino-6-(D-ribitylamino)uracil site. 78-79 (ET) lines the (2S)-2-hydroxy-3-oxobutyl phosphate pocket. His81 serves as the catalytic Proton donor. Residue Phe106 coordinates 5-amino-6-(D-ribitylamino)uracil. Arg120 contacts (2S)-2-hydroxy-3-oxobutyl phosphate.

Belongs to the DMRL synthase family. As to quaternary structure, forms an icosahedral capsid composed of 60 subunits, arranged as a dodecamer of pentamers.

The catalysed reaction is (2S)-2-hydroxy-3-oxobutyl phosphate + 5-amino-6-(D-ribitylamino)uracil = 6,7-dimethyl-8-(1-D-ribityl)lumazine + phosphate + 2 H2O + H(+). It functions in the pathway cofactor biosynthesis; riboflavin biosynthesis; riboflavin from 2-hydroxy-3-oxobutyl phosphate and 5-amino-6-(D-ribitylamino)uracil: step 1/2. Catalyzes the formation of 6,7-dimethyl-8-ribityllumazine by condensation of 5-amino-6-(D-ribitylamino)uracil with 3,4-dihydroxy-2-butanone 4-phosphate. This is the penultimate step in the biosynthesis of riboflavin. The protein is 6,7-dimethyl-8-ribityllumazine synthase of Coxiella burnetii (strain CbuG_Q212) (Coxiella burnetii (strain Q212)).